The primary structure comprises 733 residues: Alpha,alpha-trehalose-phosphate synthase [UDP-forming] A (733 aa).

This sequence in the N-terminal section; belongs to the glycosyltransferase 20 family. In the C-terminal section; belongs to the trehalose phosphatase family.

It catalyses the reaction D-glucose 6-phosphate + UDP-alpha-D-glucose = alpha,alpha-trehalose 6-phosphate + UDP + H(+). Its function is as follows. Synthesizes trehalose 6-phosphate, the precursor for the production of trehalose, the main carbohydrate storage reserve of the dormant spore. Trehalose accumulates in both prestalk and prespore cells and then is rapidly metabolized during terminal differentiation of stalk cells, while being stored in spores, where it serves as the principal energy and carbon source for germination. The protein is Alpha,alpha-trehalose-phosphate synthase [UDP-forming] A (tpsA) of Dictyostelium discoideum (Social amoeba).